The sequence spans 110 residues: Small ribosomal subunit protein uS17 (110 aa).

The protein belongs to the universal ribosomal protein uS17 family. As to quaternary structure, part of the 30S ribosomal subunit.

In terms of biological role, one of the primary rRNA binding proteins, it binds specifically to the 5'-end of 16S ribosomal RNA. This chain is Small ribosomal subunit protein uS17, found in Petrotoga mobilis (strain DSM 10674 / SJ95).